The sequence spans 188 residues: Putative CC-type chemokine FPV060 (188 aa).

This sequence belongs to the intercrine beta (chemokine CC) family. Highly divergent.

This chain is Putative CC-type chemokine FPV060, found in Fowlpox virus (strain NVSL) (FPV).